Reading from the N-terminus, the 197-residue chain is Cell division protein SepF (197 aa).

Disordered stretches follow at residues 38–72 (MPTP…TTPT) and 164–197 (LSRE…AQAQ). Over residues 58–72 (TVASNFAMNSNTTPT) the composition is skewed to polar residues. Residues 170–185 (PATPAAPARPAAPAPA) are compositionally biased toward low complexity.

It belongs to the SepF family. In terms of assembly, homodimer. Interacts with FtsZ.

The protein resides in the cytoplasm. In terms of biological role, cell division protein that is part of the divisome complex and is recruited early to the Z-ring. Probably stimulates Z-ring formation, perhaps through the cross-linking of FtsZ protofilaments. Its function overlaps with FtsA. In Picosynechococcus sp. (strain ATCC 27264 / PCC 7002 / PR-6) (Agmenellum quadruplicatum), this protein is Cell division protein SepF.